The chain runs to 621 residues: Chaperone protein HscA homolog (621 aa).

It belongs to the heat shock protein 70 family.

Chaperone involved in the maturation of iron-sulfur cluster-containing proteins. Has a low intrinsic ATPase activity which is markedly stimulated by HscB. The protein is Chaperone protein HscA homolog of Pseudomonas fluorescens (strain Pf0-1).